The primary structure comprises 360 residues: Protein phosphatase methylesterase 1 (360 aa).

A disordered region spans residues 26-50; the sequence is DEDDIPEPAVMPPTGNSSSTANTED. Active-site residues include S167, D192, and H316.

Belongs to the AB hydrolase superfamily.

The enzyme catalyses [phosphatase 2A protein]-C-terminal L-leucine methyl ester + H2O = [phosphatase 2A protein]-C-terminal L-leucine + methanol + H(+). In terms of biological role, demethylates proteins that have been reversibly carboxymethylated. Demethylates the phosphatase PP2A catalytic subunit. Involved in the regulation of filamentous growth. The protein is Protein phosphatase methylesterase 1 (PPE1) of Candida albicans (strain SC5314 / ATCC MYA-2876) (Yeast).